A 211-amino-acid chain; its full sequence is Interleukin-6 (211 aa).

Positions 1–25 (MNSLSTSTFSPVAFSLGLLLVMATA) are cleaved as a signal peptide. A disulfide bond links Cys-71 and Cys-77. Ser-80 bears the Phosphoserine mark. Cysteines 100 and 110 form a disulfide.

The protein belongs to the IL-6 superfamily. In terms of assembly, component of a hexamer of two molecules each of IL6, IL6R and IL6ST; first binds to IL6R to associate with the signaling subunit IL6ST. Interacts with IL6R (via the N-terminal ectodomain); this interaction may be affected by IL6R-binding with SORL1, hence decreasing IL6 cis signaling. Interacts with SORL1 (via the N-terminal ectodomain); this interaction leads to IL6 internalization and lysosomal degradation. May form a trimeric complex with the soluble SORL1 ectodomain and soluble IL6R receptor; this interaction might stabilize circulating IL6, hence promoting IL6 trans signaling.

Its subcellular location is the secreted. Functionally, cytokine with a wide variety of biological functions in immunity, tissue regeneration, and metabolism. Binds to IL6R, then the complex associates to the signaling subunit IL6ST/gp130 to trigger the intracellular IL6-signaling pathway. The interaction with the membrane-bound IL6R and IL6ST stimulates 'classic signaling', whereas the binding of IL6 and soluble IL6R to IL6ST stimulates 'trans-signaling'. Alternatively, 'cluster signaling' occurs when membrane-bound IL6:IL6R complexes on transmitter cells activate IL6ST receptors on neighboring receiver cells. IL6 is a potent inducer of the acute phase response. Rapid production of IL6 contributes to host defense during infection and tissue injury, but excessive IL6 synthesis is involved in disease pathology. In the innate immune response, is synthesized by myeloid cells, such as macrophages and dendritic cells, upon recognition of pathogens through toll-like receptors (TLRs) at the site of infection or tissue injury. In the adaptive immune response, is required for the differentiation of B cells into immunoglobulin-secreting cells. Plays a major role in the differentiation of CD4(+) T cell subsets. Essential factor for the development of T follicular helper (Tfh) cells that are required for the induction of germinal-center formation. Required to drive naive CD4(+) T cells to the Th17 lineage. Also required for proliferation of myeloma cells and the survival of plasmablast cells. Its function is as follows. Acts as an essential factor in bone homeostasis and on vessels directly or indirectly by induction of VEGF, resulting in increased angiogenesis activity and vascular permeability. Induces, through 'trans-signaling' and synergistically with IL1B and TNF, the production of VEGF. Involved in metabolic controls, is discharged into the bloodstream after muscle contraction increasing lipolysis and improving insulin resistance. 'Trans-signaling' in central nervous system also regulates energy and glucose homeostasis. Mediates, through GLP-1, crosstalk between insulin-sensitive tissues, intestinal L cells and pancreatic islets to adapt to changes in insulin demand. Also acts as a myokine. Plays a protective role during liver injury, being required for maintenance of tissue regeneration. Also has a pivotal role in iron metabolism by regulating HAMP/hepcidin expression upon inflammation or bacterial infection. Through activation of IL6ST-YAP-NOTCH pathway, induces inflammation-induced epithelial regeneration. The protein is Interleukin-6 (IL6) of Lama glama (Llama).